The sequence spans 279 residues: Probable endonuclease 4 (279 aa).

The Zn(2+) site is built by H66, H106, E142, D176, H179, H213, D226, H228, and E258.

This sequence belongs to the AP endonuclease 2 family. It depends on Zn(2+) as a cofactor.

It carries out the reaction Endonucleolytic cleavage to 5'-phosphooligonucleotide end-products.. Functionally, endonuclease IV plays a role in DNA repair. It cleaves phosphodiester bonds at apurinic or apyrimidinic (AP) sites, generating a 3'-hydroxyl group and a 5'-terminal sugar phosphate. In Photobacterium profundum (strain SS9), this protein is Probable endonuclease 4.